A 289-amino-acid polypeptide reads, in one-letter code: F-actin-capping protein subunit beta (289 aa).

The interval 73–110 (RSPWSNQFDPPLEGGNQGGSGGDGEGDGGEGGAAGSIM) is disordered. Gly residues predominate over residues 87–106 (GNQGGSGGDGEGDGGEGGAA).

It belongs to the F-actin-capping protein beta subunit family. As to quaternary structure, component of the F-actin capping complex, composed of a heterodimer of an alpha and a beta subunit.

The protein resides in the cytoplasm. Its subcellular location is the cytoskeleton. It localises to the actin patch. Functionally, F-actin-capping proteins bind in a Ca(2+)-independent manner to the fast growing ends of actin filaments (barbed end) thereby blocking the exchange of subunits at these ends. Unlike other capping proteins (such as gelsolin and severin), these proteins do not sever actin filaments. The protein is F-actin-capping protein subunit beta (fac-2) of Neurospora crassa (strain ATCC 24698 / 74-OR23-1A / CBS 708.71 / DSM 1257 / FGSC 987).